Reading from the N-terminus, the 506-residue chain is NAD(P)H-quinone oxidoreductase subunit 2, chloroplastic (506 aa).

The next 13 helical transmembrane spans lie at 15 to 35 (LIPEGIVACTILLVLLLDLVY), 39 to 59 (CHAWLAWVAMAGLSLASVLLG), 84 to 104 (LSLVFRAIIAMSCVLCILLSI), 113 to 133 (APSEFLVLIATASLGGMLVAG), 137 to 157 (LLMMFVSLETLGLASYLLTGY), 172 to 192 (LLVGAASSGLFLYGISWMYGI), 217 to 237 (CALALVLMTVGVGFKVAAAPF), 249 to 269 (PTPVVAFLSVGSKAAGFILAV), 283 to 303 (WHLIFTILSILSMIVGNFIAV), 339 to 359 (IVYLLIYLFMNLGAFACVILF), 382 to 402 (ALCLSLCLLSLGGIPPLAGFF), 418 to 438 (SLVWVGLITSVVSIYYYLSVV), and 471 to 491 (VGIFVCVLGSILVGVAGNSMV).

This sequence belongs to the complex I subunit 2 family. As to quaternary structure, NDH is composed of at least 16 different subunits, 5 of which are encoded in the nucleus.

The protein localises to the plastid. The protein resides in the chloroplast thylakoid membrane. It carries out the reaction a plastoquinone + NADH + (n+1) H(+)(in) = a plastoquinol + NAD(+) + n H(+)(out). The enzyme catalyses a plastoquinone + NADPH + (n+1) H(+)(in) = a plastoquinol + NADP(+) + n H(+)(out). Its function is as follows. NDH shuttles electrons from NAD(P)H:plastoquinone, via FMN and iron-sulfur (Fe-S) centers, to quinones in the photosynthetic chain and possibly in a chloroplast respiratory chain. The immediate electron acceptor for the enzyme in this species is believed to be plastoquinone. Couples the redox reaction to proton translocation, and thus conserves the redox energy in a proton gradient. This chain is NAD(P)H-quinone oxidoreductase subunit 2, chloroplastic, found in Nephroselmis olivacea (Green alga).